The following is a 385-amino-acid chain: Cytochrome b (385 aa).

A run of 4 helical transmembrane segments spans residues 32–52 (LGSL…FMAM), 76–98 (WLLR…MHIA), 113–133 (VWIV…LGYC), and 179–199 (FFAL…MHFM). 2 residues coordinate heme b: histidine 82 and histidine 96. Residues histidine 183 and histidine 197 each contribute to the heme b site. Histidine 202 provides a ligand contact to a ubiquinone. The next 4 helical transmembrane spans lie at 225–245 (FIFK…LFVF), 289–309 (LLGV…PITD), 321–341 (LSKF…QIGQ), and 348–368 (FVLM…IIVP).

The protein belongs to the cytochrome b family. As to quaternary structure, fungal cytochrome b-c1 complex contains 10 subunits; 3 respiratory subunits, 2 core proteins and 5 low-molecular weight proteins. Cytochrome b-c1 complex is a homodimer. Heme b serves as cofactor.

It localises to the mitochondrion inner membrane. Component of the ubiquinol-cytochrome c reductase complex (complex III or cytochrome b-c1 complex) that is part of the mitochondrial respiratory chain. The b-c1 complex mediates electron transfer from ubiquinol to cytochrome c. Contributes to the generation of a proton gradient across the mitochondrial membrane that is then used for ATP synthesis. This Candida glabrata (strain ATCC 2001 / BCRC 20586 / JCM 3761 / NBRC 0622 / NRRL Y-65 / CBS 138) (Yeast) protein is Cytochrome b (COB).